Reading from the N-terminus, the 463-residue chain is A-type ATP synthase subunit B (463 aa).

The protein belongs to the ATPase alpha/beta chains family. As to quaternary structure, has multiple subunits with at least A(3), B(3), C, D, E, F, H, I and proteolipid K(x).

The protein resides in the cell membrane. Its function is as follows. Component of the A-type ATP synthase that produces ATP from ADP in the presence of a proton gradient across the membrane. The B chain is a regulatory subunit. The chain is A-type ATP synthase subunit B from Methanothermobacter thermautotrophicus (strain ATCC 29096 / DSM 1053 / JCM 10044 / NBRC 100330 / Delta H) (Methanobacterium thermoautotrophicum).